The following is a 491-amino-acid chain: Phosphoethanolamine N-methyltransferase 1 (491 aa).

Ala2 carries the post-translational modification N-acetylalanine. S-adenosyl-L-homocysteine-binding residues include Gly61, Arg66, Asp82, Asp107, Val108, and Asn126. Positions 159, 164, 165, 169, and 176 each coordinate phosphocholine. Residues 245–246 (QY) and Tyr254 each bind N-methylethanolamine phosphate. Tyr254 is a binding site for phosphocholine. S-adenosyl-L-homocysteine is bound by residues Val263, Ser264, Gly290, Asp312, Asp338, Cys339, and Arg355. Tyr386, Tyr400, Arg404, Tyr406, and Lys472 together coordinate phosphocholine. N-methylethanolamine phosphate-binding positions include Tyr386, Tyr400, 404-406 (RGY), and Lys472.

This sequence belongs to the class I-like SAM-binding methyltransferase superfamily. PEAMT family. As to expression, highly expressed in the meristem and elongation zones of the root. Expressed in differentiated root epidermal cells. Highly expressed in leaf vasculature.

Its subcellular location is the cytoplasm. It catalyses the reaction phosphoethanolamine + S-adenosyl-L-methionine = N-methylethanolamine phosphate + S-adenosyl-L-homocysteine + H(+). The catalysed reaction is N-methylethanolamine phosphate + S-adenosyl-L-methionine = N,N-dimethylethanolamine phosphate + S-adenosyl-L-homocysteine + H(+). It carries out the reaction N,N-dimethylethanolamine phosphate + S-adenosyl-L-methionine = phosphocholine + S-adenosyl-L-homocysteine + H(+). Its pathway is phospholipid metabolism; phosphatidylcholine biosynthesis; phosphocholine from phosphoethanolamine: step 1/1. Functionally, involved in phosphocholine biosynthesis. Catalyzes the N-methylation of phosphoethanolamine, phosphomonomethylethanolamine and phosphodimethylethanolamine, the three methylation steps required to convert phosphoethanolamine to phosphocholine (PC). Required for root system development and epidermal cell integrity through its role in choline and phospholipid metabolism. In association with NMT3, regulates PC homeostasis, phase transition at the shoot apex, coordinated organ development, and fertility. In association with NMT3, involved in phosphatidylcholine biosynthesis and vascular development. In association with NMT2, involved in the production of phosphatidylcholine in roots, essential for root development. In association with NMT2 produce phosphocholine mainly for leaf growth maintenance. Contributes to the regulation of overall root zonation dynamics through reactive oxygen species (ROS) and auxin-regulated cell differentiation. Participates in root development of primary root elongation under salt stress conditions by balancing reactive oxygen species (ROS) production and distribution through abscisic acid (ABA) signaling. The protein is Phosphoethanolamine N-methyltransferase 1 of Arabidopsis thaliana (Mouse-ear cress).